Here is a 232-residue protein sequence, read N- to C-terminus: Phosphatidylserine decarboxylase proenzyme (232 aa).

Ser190 serves as the catalytic Schiff-base intermediate with substrate; via pyruvic acid. The residue at position 190 (Ser190) is a Pyruvic acid (Ser); by autocatalysis.

The protein belongs to the phosphatidylserine decarboxylase family. PSD-A subfamily. Heterodimer of a large membrane-associated beta subunit and a small pyruvoyl-containing alpha subunit. The cofactor is pyruvate. Post-translationally, is synthesized initially as an inactive proenzyme. Formation of the active enzyme involves a self-maturation process in which the active site pyruvoyl group is generated from an internal serine residue via an autocatalytic post-translational modification. Two non-identical subunits are generated from the proenzyme in this reaction, and the pyruvate is formed at the N-terminus of the alpha chain, which is derived from the carboxyl end of the proenzyme. The post-translation cleavage follows an unusual pathway, termed non-hydrolytic serinolysis, in which the side chain hydroxyl group of the serine supplies its oxygen atom to form the C-terminus of the beta chain, while the remainder of the serine residue undergoes an oxidative deamination to produce ammonia and the pyruvoyl prosthetic group on the alpha chain.

It localises to the cell membrane. It catalyses the reaction a 1,2-diacyl-sn-glycero-3-phospho-L-serine + H(+) = a 1,2-diacyl-sn-glycero-3-phosphoethanolamine + CO2. It participates in phospholipid metabolism; phosphatidylethanolamine biosynthesis; phosphatidylethanolamine from CDP-diacylglycerol: step 2/2. In terms of biological role, catalyzes the formation of phosphatidylethanolamine (PtdEtn) from phosphatidylserine (PtdSer). This chain is Phosphatidylserine decarboxylase proenzyme, found in Brucella canis (strain ATCC 23365 / NCTC 10854 / RM-666).